The chain runs to 94 residues: Putative toxin RelE4 (94 aa).

It belongs to the RelE toxin family.

In terms of biological role, toxic component of a type II toxin-antitoxin (TA) system. Its cognate antitoxin is RelB4 (Potential). The polypeptide is Putative toxin RelE4 (relE4) (Methanocaldococcus jannaschii (strain ATCC 43067 / DSM 2661 / JAL-1 / JCM 10045 / NBRC 100440) (Methanococcus jannaschii)).